Consider the following 259-residue polypeptide: Ribosomal RNA small subunit methyltransferase J (259 aa).

S-adenosyl-L-methionine is bound by residues 109-110 (RD), 125-126 (ER), 161-162 (SS), and Asp-179.

The protein belongs to the methyltransferase superfamily. RsmJ family.

The protein localises to the cytoplasm. It catalyses the reaction guanosine(1516) in 16S rRNA + S-adenosyl-L-methionine = N(2)-methylguanosine(1516) in 16S rRNA + S-adenosyl-L-homocysteine + H(+). Its function is as follows. Specifically methylates the guanosine in position 1516 of 16S rRNA. This is Ribosomal RNA small subunit methyltransferase J from Shewanella putrefaciens (strain CN-32 / ATCC BAA-453).